Here is a 492-residue protein sequence, read N- to C-terminus: Probable small intestine urate exporter (492 aa).

A disordered region spans residues 1–20; it reads MSTGADLKAREGDIPSDNMT. 6 N-linked (GlcNAc...) asparagine glycosylation sites follow: asparagine 18, asparagine 44, asparagine 53, asparagine 63, asparagine 72, and asparagine 87. The next 11 membrane-spanning stretches (helical) occupy residues 112–132, 134–154, 156–176, 198–218, 225–245, 287–307, 327–347, 363–383, 393–413, 426–446, and 456–476; these read LSYG…VFGA, YVVG…PLAA, AGVA…VMVL, IAAS…GLIC, YIFY…FPLV, LPLW…STVM, ILSA…GLLA, KLFT…LPWV, FLVL…INFL, LLQV…GFFI, and NVFF…LIFS.

The protein belongs to the major facilitator superfamily. Sodium/anion cotransporter family. In terms of tissue distribution, expressed in the small intestine (at protein level).

It localises to the apical cell membrane. It carries out the reaction 3 Na(+)(out) + phosphate(out) = 3 Na(+)(in) + phosphate(in). The catalysed reaction is urate(out) + n chloride(in) = urate(in) + n chloride(out). The enzyme catalyses L-thyroxine(out) = L-thyroxine(in). It catalyses the reaction 3,3',5-triiodo-L-thyronine(out) = 3,3',5-triiodo-L-thyronine(in). Its function is as follows. Acts as a membrane potential-dependent organic anion transporter, the transport requires a low concentration of chloride ions. Mediates chloride-dependent transport of urate. Mediates sodium-independent high affinity transport of thyroid hormones including L-thyroxine (T4) and 3,3',5-triiodo-L-thyronine (T3). Can actively transport inorganic phosphate into cells via Na(+) cotransport. The polypeptide is Probable small intestine urate exporter (Slc17a4) (Mus musculus (Mouse)).